The chain runs to 523 residues: Frizzled-4 (523 aa).

Positions 1–22 (MGARSLTLLYLLCCLVVGLIAG) are cleaved as a signal peptide. At 23 to 198 (FGEEEERSCD…KCGYDSGLYN (176 aa)) the chain is on the extracellular side. The 122-residue stretch at 26 to 147 (EEERSCDPIR…NDHNHMCMEG (122 aa)) folds into the FZ domain. 8 disulfides stabilise this stretch: cysteine 31–cysteine 92, cysteine 39–cysteine 85, cysteine 76–cysteine 114, cysteine 103–cysteine 144, cysteine 107–cysteine 131, cysteine 167–cysteine 186, cysteine 190–cysteine 268, and cysteine 288–cysteine 363. A glycan (N-linked (GlcNAc...) asparagine) is linked at asparagine 45. Asparagine 130 is a glycosylation site (N-linked (GlcNAc...) asparagine). A helical transmembrane segment spans residues 199-229 (RLSKEFTDIWMAVWASLCFISTAFTVLTFLI). Residues 230–235 (DSSRFC) lie on the Cytoplasmic side of the membrane. The helical transmembrane segment at 236 to 261 (YPERPIIFLSMCYNIYSIAYIVRLTV) threads the bilayer. The Extracellular portion of the chain corresponds to 262 to 285 (GRERISCDFEEAAEPVLIQEGLKN). A helical transmembrane segment spans residues 286–319 (TGCAIIFLLMYFFGMASSIWWVILTLTWFLAAGL). Residues 320-322 (KWG) lie on the Cytoplasmic side of the membrane. The chain crosses the membrane as a helical span at residues 323–351 (HEAIEMHSSYFHIAAWAIPAVKTIVILIM). Residues 352–369 (RLVDADELTGLCYVGNQN) are Extracellular-facing. The helical transmembrane segment at 370–396 (IDALTGFVVAPLFTYLVIGTLFIAAGL) threads the bilayer. Residues 397–417 (VALFKIRSNLQKDGTKTDKLE) are Cytoplasmic-facing. The chain crosses the membrane as a helical span at residues 418 to 443 (RLMVKIGVFSVLYTVPATCVIACYFY). Topologically, residues 444–459 (EVSNWNVFRYTADDSN) are extracellular. Residues 460-481 (MAVEMLNIFMSLLVGITSGMWI) form a helical membrane-spanning segment. Residues 482-523 (WSAKTLHTWQKCTNRLVNSGKVKRKKRVDGWVKPGKGNETVV) lie on the Cytoplasmic side of the membrane. Residues 485-490 (KTLHTW) carry the Lys-Thr-X-X-X-Trp motif, mediates interaction with the PDZ domain of Dvl family members motif. A PDZ-binding motif is present at residues 521-523 (TVV).

This sequence belongs to the G-protein coupled receptor Fz/Smo family. Interacts (via FZ domain) with tsku; tsku competes with wnt2b for binding to fzd4, inhibiting Wnt signaling and repressing peripheral eye development.

It localises to the cell membrane. Its function is as follows. Receptor for Wnt proteins. Most frizzled receptors are coupled to the beta-catenin canonical signaling pathway, which leads to the activation of disheveled proteins, inhibition of GSK-3 kinase, nuclear accumulation of beta-catenin and activation of Wnt target genes. A second signaling pathway involving PKC and calcium fluxes has been seen for some family members, but it is not yet clear if it represents a distinct pathway or if it can be integrated in the canonical pathway, as PKC seems to be required for Wnt-mediated inactivation of GSK-3 kinase. Both pathways seem to involve interactions with G-proteins. May be involved in transduction and intercellular transmission of polarity information during tissue morphogenesis and/or in differentiated tissues. Activated by Wnt5A. The sequence is that of Frizzled-4 (fzd4) from Xenopus laevis (African clawed frog).